The following is a 320-amino-acid chain: Mitochondrial thiamine pyrophosphate carrier (320 aa).

Solcar repeat units lie at residues 13–106 (NTKF…LTEL), 116–202 (REFS…LKHL), and 214–309 (NENL…FCNV). The chain crosses the membrane as a helical span at residues 19–39 (AVAGSVSGLVTRALISPFDVI). At serine 51 the chain carries Phosphoserine. A run of 4 helical transmembrane segments spans residues 87–107 (ILSI…TELV), 122–142 (FVCG…VDVL), 173–193 (VFYK…GLQF), and 220–240 (LLCG…LDLF). The short motif at 241–246 (KKRLQV) is the Substrate recognition element. A helical membrane pass occupies residues 293–313 (ALSTGFMFFSYEFFCNVFHCM).

The protein belongs to the mitochondrial carrier (TC 2.A.29) family. In terms of tissue distribution, expressed in all tissues examined except for placenta. Highest levels in colon, kidney, lung, testis, spleen, and brain.

It localises to the mitochondrion membrane. The enzyme catalyses thiamine phosphate(out) + thiamine diphosphate(in) = thiamine phosphate(in) + thiamine diphosphate(out). Mitochondrial transporter mediating uptake of thiamine diphosphate into mitochondria. It is not clear if the antiporter activity is affected by the membrane potential or by the proton electrochemical gradient. In Homo sapiens (Human), this protein is Mitochondrial thiamine pyrophosphate carrier.